The following is a 341-amino-acid chain: Peroxisomal membrane protein PEX14 (341 aa).

Position 2 is an N-acetylserine (serine 2). An SH3-binding motif is present at residues 86–94 (PPTLPHRDW). The segment at 276 to 341 (MQEESDKEKE…QNGQVEDSIP (66 aa)) is disordered. Basic and acidic residues predominate over residues 279 to 295 (ESDKEKENGSDANKDDN). Positions 308–341 (IDSNASIPEWQKNTAANEISVPDWQNGQVEDSIP) are enriched in polar residues. Residue serine 313 is modified to Phosphoserine.

The protein belongs to the peroxin-14 family. Interacts with PEX13 (via SH3 domain); forming the PEX13-PEX14 docking complex. Interacts with PEX5 (via WxxxF/Y motifs). Interacts with PEX7. Interacts with PEX9.

It localises to the peroxisome membrane. In terms of biological role, component of the PEX13-PEX14 docking complex, a translocon channel that specifically mediates the import of peroxisomal cargo proteins bound to PEX5 or PEX21 receptors. The PEX13-PEX14 docking complex forms a large import pore which can be opened to a diameter of about 9 nm. Mechanistically, PEX5 (or PEX21) receptor along with cargo proteins associates with the PEX14 subunit of the PEX13-PEX14 docking complex in the cytosol, leading to the insertion of the receptor into the organelle membrane with the concomitant translocation of the cargo into the peroxisome matrix. This Saccharomyces cerevisiae (strain ATCC 204508 / S288c) (Baker's yeast) protein is Peroxisomal membrane protein PEX14.